The primary structure comprises 85 residues: Alpha-insect toxin Bot14 (85 aa).

An N-terminal signal peptide occupies residues 1–18; that stretch reads MSSLMISTAMKGKAPYRQ. The region spanning 20 to 84 is the LCN-type CS-alpha/beta domain; the sequence is RDGYIAQPHN…GIIVHGEKCH (65 aa). 4 disulfides stabilise this stretch: cysteine 30/cysteine 83, cysteine 34/cysteine 55, cysteine 41/cysteine 65, and cysteine 45/cysteine 67.

The protein belongs to the long (4 C-C) scorpion toxin superfamily. Sodium channel inhibitor family. Alpha subfamily. Expressed by the venom gland.

The protein localises to the secreted. In terms of biological role, alpha toxins bind voltage-independently at site-3 of sodium channels (Nav) and inhibit the inactivation of the activated channels, thereby blocking neuronal transmission. This toxin is active only on insects. The sequence is that of Alpha-insect toxin Bot14 from Buthus occitanus tunetanus (Common European scorpion).